The chain runs to 502 residues: MDESKKISLGQFFTPTHIVKYMIGLMTKNKNASILEPSSGNGVFLDSLIQLGYTNLTSYEIDGDIISHPFVINSSFITSYDKPQYDSIIGNPPYVRWKNLSELQKKELKDNSIWKMYCNSLCDYFYIFIIKSILQLKVGGELIFICPDYFFSTKNAEGLRKFLINNGSFEKIILFNESKVFHGVSSSVVIFKYIKGKNIDNINIINIDSKSPIKSEDIESLGESYYIPRFSSSDVWVTSPNHIKVALDKFESYCKTIKKVQQKSLFDDLSFLDKAFQMNDINYSELELLNSICVAKAKHLDAFCFSGYTRYKLILDDNNEDKLITYFPNFFYEFNNYKDYLLKRYSYNKYLPYWEVAFLRNFSLFSKNEKKIFVPCKERISKKSNFRFSLVDEFIYPTQDVTALYKKENVKESIEYITAYLNSKAVFLWMKYKGVVKGNVVEFSEKPLTNIPFRRIDWQLKSEKKIHDDITNLVRKYLSNKEFSILHEINLNLEKLGIKVEI.

This sequence belongs to the N(4)/N(6)-methyltransferase family.

The catalysed reaction is a 2'-deoxyadenosine in DNA + S-adenosyl-L-methionine = an N(6)-methyl-2'-deoxyadenosine in DNA + S-adenosyl-L-homocysteine + H(+). Its function is as follows. A gamma subtype methylase that recognizes the double-stranded sequence 5'-GTYRAC-3', methylates A-5 on both strands, and protects the DNA from cleavage by the HincII endonuclease. This Haemophilus influenzae protein is Type II methyltransferase M.HincII.